Consider the following 384-residue polypeptide: DNA replication and repair protein RecF (384 aa).

Residue 30-37 coordinates ATP; the sequence is GENAQGKT.

Belongs to the RecF family.

Its subcellular location is the cytoplasm. The RecF protein is involved in DNA metabolism; it is required for DNA replication and normal SOS inducibility. RecF binds preferentially to single-stranded, linear DNA. It also seems to bind ATP. In Levilactobacillus brevis (strain ATCC 367 / BCRC 12310 / CIP 105137 / JCM 1170 / LMG 11437 / NCIMB 947 / NCTC 947) (Lactobacillus brevis), this protein is DNA replication and repair protein RecF.